We begin with the raw amino-acid sequence, 395 residues long: Elongation factor Tu (395 aa).

Residues 6 to 205 enclose the tr-type G domain; sequence KPHINVGTIG…NALEKIDLPI (200 aa). The G1 stretch occupies residues 15-22; the sequence is GHVDHGKT. Position 15–22 (15–22) interacts with GTP; it reads GHVDHGKT. T22 lines the Mg(2+) pocket. Residues 59–63 form a G2 region; that stretch reads GITIS. The segment at 80–83 is G3; sequence DCPG. GTP contacts are provided by residues 80 to 84 and 135 to 138; these read DCPGH and NKCD. The tract at residues 135–138 is G4; the sequence is NKCD. Residues 173–175 form a G5 region; sequence SAV.

This sequence belongs to the TRAFAC class translation factor GTPase superfamily. Classic translation factor GTPase family. EF-Tu/EF-1A subfamily. As to quaternary structure, monomer.

The protein localises to the cytoplasm. The catalysed reaction is GTP + H2O = GDP + phosphate + H(+). Functionally, GTP hydrolase that promotes the GTP-dependent binding of aminoacyl-tRNA to the A-site of ribosomes during protein biosynthesis. In Ehrlichia ruminantium (strain Gardel), this protein is Elongation factor Tu.